Consider the following 408-residue polypeptide: Protein EcsB (408 aa).

9 helical membrane-spanning segments follow: residues 30–50 (HLVI…SKWI), 53–73 (IPAH…VLTS), 111–131 (LFPL…VTPG), 134–154 (LVSY…NQVM), 180–200 (LVLY…YVIM), 284–304 (YLGI…YVSA), 308–328 (IAAV…LPLF), 351–371 (YFSL…VASA), and 374–394 (AGLT…FVVL).

The protein resides in the cell membrane. Presumed to form part of an ABC-transporter, it may form a transport channel. In Bacillus subtilis (strain 168), this protein is Protein EcsB (ecsB).